Reading from the N-terminus, the 230-residue chain is LexA repressor (230 aa).

The segment at residues 28–48 is a DNA-binding region (H-T-H motif); the sequence is LREIGAHMGIRSTNGVNDHLR. Catalysis depends on for autocatalytic cleavage activity residues Ser149 and Lys186.

Belongs to the peptidase S24 family. In terms of assembly, homodimer.

It catalyses the reaction Hydrolysis of Ala-|-Gly bond in repressor LexA.. In terms of biological role, represses a number of genes involved in the response to DNA damage (SOS response), including recA and lexA. In the presence of single-stranded DNA, RecA interacts with LexA causing an autocatalytic cleavage which disrupts the DNA-binding part of LexA, leading to derepression of the SOS regulon and eventually DNA repair. The sequence is that of LexA repressor from Sorangium cellulosum (strain So ce56) (Polyangium cellulosum (strain So ce56)).